A 252-amino-acid chain; its full sequence is Triosephosphate isomerase (252 aa).

9–11 is a substrate binding site; that stretch reads NWK. Residue histidine 95 is the Electrophile of the active site. The active-site Proton acceptor is the glutamate 167. Substrate contacts are provided by residues glycine 173, serine 213, and 234-235; that span reads GG. The residue at position 213 (serine 213) is a Phosphoserine.

The protein belongs to the triosephosphate isomerase family. In terms of assembly, homodimer.

It is found in the cytoplasm. The catalysed reaction is D-glyceraldehyde 3-phosphate = dihydroxyacetone phosphate. It functions in the pathway carbohydrate biosynthesis; gluconeogenesis. Its pathway is carbohydrate degradation; glycolysis; D-glyceraldehyde 3-phosphate from glycerone phosphate: step 1/1. Its function is as follows. Involved in the gluconeogenesis. Catalyzes stereospecifically the conversion of dihydroxyacetone phosphate (DHAP) to D-glyceraldehyde-3-phosphate (G3P). The sequence is that of Triosephosphate isomerase from Oceanobacillus iheyensis (strain DSM 14371 / CIP 107618 / JCM 11309 / KCTC 3954 / HTE831).